The chain runs to 550 residues: Putative pentatricopeptide repeat-containing protein At5g37570 (550 aa).

PPR repeat units follow at residues 73–107 (GTYL…GLAR), 109–143 (DEYT…GFDK), 144–174 (DVVV…MPER), 175–205 (NAVS…MPER), 206–240 (NLGS…DIIS), 241–267 (YTSM…ARGV), 268–302 (DVRA…NVKP), 303–333 (DEFI…LHQR), 339–369 (SHYV…MPQR), 370–404 (DLVS…GIVP), 405–435 (DEVA…MRKK), and 441–475 (SPDH…AHAS). A type E motif region spans residues 476–550 (AWGSLLGGCS…KICGRSWISR (75 aa)).

Belongs to the PPR family. PCMP-E subfamily.

This chain is Putative pentatricopeptide repeat-containing protein At5g37570 (PCMP-E37), found in Arabidopsis thaliana (Mouse-ear cress).